The primary structure comprises 31 residues: Cyclotide mden-K (31 aa).

Residues 1–31 constitute a cross-link (cyclopeptide (Gly-Asn)); sequence GSIPCGESCVWIPCISSVVGCACKNKVCYKN. Disulfide bonds link C5-C21, C9-C23, and C14-C28.

It belongs to the cyclotide family. Bracelet subfamily. In terms of processing, this is a cyclic peptide.

Functionally, probably participates in a plant defense mechanism. The polypeptide is Cyclotide mden-K (Melicytus dentatus (Tree violet)).